The chain runs to 51 residues: MSKHKSLGKKLRLGKALKRNSPIPAWVIIKTQAEIRFNPLRRNWRRNNLKV.

The protein belongs to the eukaryotic ribosomal protein eL39 family.

In terms of biological role, binds specifically to a region in 26S rRNA near the subunit interface. This Sulfolobus acidocaldarius (strain ATCC 33909 / DSM 639 / JCM 8929 / NBRC 15157 / NCIMB 11770) protein is Large ribosomal subunit protein eL39 (rpl39e).